We begin with the raw amino-acid sequence, 440 residues long: Adenylosuccinate lyase (440 aa).

Residues 4–5, 67–69, and 93–94 each bind N(6)-(1,2-dicarboxyethyl)-AMP; these read RY, KHD, and TS. The Proton donor/acceptor role is filled by H141. Residue Q212 participates in N(6)-(1,2-dicarboxyethyl)-AMP binding. The Proton donor/acceptor role is filled by S262. N(6)-(1,2-dicarboxyethyl)-AMP-binding positions include S263, 268 to 270, N276, and 307 to 311; these read KRN and SVERF.

The protein belongs to the lyase 1 family. Adenylosuccinate lyase subfamily. In terms of assembly, homotetramer. Residues from neighboring subunits contribute catalytic and substrate-binding residues to each active site.

It catalyses the reaction N(6)-(1,2-dicarboxyethyl)-AMP = fumarate + AMP. The enzyme catalyses (2S)-2-[5-amino-1-(5-phospho-beta-D-ribosyl)imidazole-4-carboxamido]succinate = 5-amino-1-(5-phospho-beta-D-ribosyl)imidazole-4-carboxamide + fumarate. The protein operates within purine metabolism; AMP biosynthesis via de novo pathway; AMP from IMP: step 2/2. It functions in the pathway purine metabolism; IMP biosynthesis via de novo pathway; 5-amino-1-(5-phospho-D-ribosyl)imidazole-4-carboxamide from 5-amino-1-(5-phospho-D-ribosyl)imidazole-4-carboxylate: step 2/2. Its function is as follows. Catalyzes two reactions in de novo purine nucleotide biosynthesis. Catalyzes the breakdown of 5-aminoimidazole- (N-succinylocarboxamide) ribotide (SAICAR or 2-[5-amino-1-(5-phospho-beta-D-ribosyl)imidazole-4-carboxamido]succinate) to 5-aminoimidazole-4-carboxamide ribotide (AICAR or 5-amino-1-(5-phospho-beta-D-ribosyl)imidazole-4-carboxamide) and fumarate, and of adenylosuccinate (ADS or N(6)-(1,2-dicarboxyethyl)-AMP) to adenosine monophosphate (AMP) and fumarate. This is Adenylosuccinate lyase (purB) from Helicobacter pylori (strain J99 / ATCC 700824) (Campylobacter pylori J99).